We begin with the raw amino-acid sequence, 465 residues long: CUGBP Elav-like family member 3 (465 aa).

RRM domains follow at residues 7 to 88 (IKLF…PADS) and 95 to 174 (KLFV…FADT). Disordered stretches follow at residues 283-311 (PVPT…QSPA) and 345-379 (PPAL…GPDG). Over residues 345–358 (PPALVAQQPPPPPQ) the composition is skewed to pro residues. Low complexity predominate over residues 359–373 (QQQQQQQQQQQQQQQ). An RRM 3 domain is found at 380–458 (CNIFIYHLPQ…KRLKVQLKRP (79 aa)).

It belongs to the CELF/BRUNOL family.

It is found in the nucleus. The protein localises to the cytoplasm. Functionally, RNA-binding protein involved in the regulation of pre-mRNA alternative splicing. Mediates exon inclusion and/or exclusion in pre-mRNA that are subject to tissue-specific and developmentally regulated alternative splicing. Specifically activates exon 5 inclusion of cardiac isoforms of TNNT2 during heart remodeling at the juvenile to adult transition. Activates the splicing of MAPT/Tau exon 10. Binds to muscle-specific splicing enhancer (MSE) intronic sites flanking the alternative exon 5 of TNNT2 pre-mRNA. This Mus musculus (Mouse) protein is CUGBP Elav-like family member 3 (Celf3).